The primary structure comprises 438 residues: Serine hydroxymethyltransferase (438 aa).

Residues leucine 119 and glycine 123–leucine 125 each bind (6S)-5,6,7,8-tetrahydrofolate. Lysine 228 carries the post-translational modification N6-(pyridoxal phosphate)lysine. A (6S)-5,6,7,8-tetrahydrofolate-binding site is contributed by serine 370 to phenylalanine 372.

This sequence belongs to the SHMT family. In terms of assembly, homodimer. Requires pyridoxal 5'-phosphate as cofactor.

It localises to the cytoplasm. It carries out the reaction (6R)-5,10-methylene-5,6,7,8-tetrahydrofolate + glycine + H2O = (6S)-5,6,7,8-tetrahydrofolate + L-serine. It participates in one-carbon metabolism; tetrahydrofolate interconversion. Its pathway is amino-acid biosynthesis; glycine biosynthesis; glycine from L-serine: step 1/1. Functionally, catalyzes the reversible interconversion of serine and glycine with tetrahydrofolate (THF) serving as the one-carbon carrier. This reaction serves as the major source of one-carbon groups required for the biosynthesis of purines, thymidylate, methionine, and other important biomolecules. Also exhibits THF-independent aldolase activity toward beta-hydroxyamino acids, producing glycine and aldehydes, via a retro-aldol mechanism. This is Serine hydroxymethyltransferase from Chlorobium chlorochromatii (strain CaD3).